Reading from the N-terminus, the 136-residue chain is Probable acyltransferase SID5 (136 aa).

Its pathway is siderophore biosynthesis. Its function is as follows. Probable acyltransferase; part of the gene cluster that mediates the biosynthesis of hydroxamate-containing siderophores that play a critical role in virulence via intracellular iron acquisition during macrophage infection. The polypeptide is Probable acyltransferase SID5 (Ajellomyces capsulatus (Darling's disease fungus)).